A 102-amino-acid chain; its full sequence is Small ribosomal subunit protein uS10 (102 aa).

Belongs to the universal ribosomal protein uS10 family. As to quaternary structure, part of the 30S ribosomal subunit.

Functionally, involved in the binding of tRNA to the ribosomes. The protein is Small ribosomal subunit protein uS10 of Bifidobacterium adolescentis (strain ATCC 15703 / DSM 20083 / NCTC 11814 / E194a).